A 678-amino-acid chain; its full sequence is DNA mismatch repair protein MutL (678 aa).

It belongs to the DNA mismatch repair MutL/HexB family.

In terms of biological role, this protein is involved in the repair of mismatches in DNA. It is required for dam-dependent methyl-directed DNA mismatch repair. May act as a 'molecular matchmaker', a protein that promotes the formation of a stable complex between two or more DNA-binding proteins in an ATP-dependent manner without itself being part of a final effector complex. The polypeptide is DNA mismatch repair protein MutL (Lactiplantibacillus plantarum (strain ATCC BAA-793 / NCIMB 8826 / WCFS1) (Lactobacillus plantarum)).